Here is a 443-residue protein sequence, read N- to C-terminus: Methylenetetrahydrofolate--tRNA-(uracil-5-)-methyltransferase TrmFO (443 aa).

8–13 (GAGLAG) is a binding site for FAD.

Belongs to the MnmG family. TrmFO subfamily. FAD serves as cofactor.

It is found in the cytoplasm. It catalyses the reaction uridine(54) in tRNA + (6R)-5,10-methylene-5,6,7,8-tetrahydrofolate + NADH + H(+) = 5-methyluridine(54) in tRNA + (6S)-5,6,7,8-tetrahydrofolate + NAD(+). The enzyme catalyses uridine(54) in tRNA + (6R)-5,10-methylene-5,6,7,8-tetrahydrofolate + NADPH + H(+) = 5-methyluridine(54) in tRNA + (6S)-5,6,7,8-tetrahydrofolate + NADP(+). Functionally, catalyzes the folate-dependent formation of 5-methyl-uridine at position 54 (M-5-U54) in all tRNAs. The sequence is that of Methylenetetrahydrofolate--tRNA-(uracil-5-)-methyltransferase TrmFO from Thermus thermophilus (strain ATCC BAA-163 / DSM 7039 / HB27).